The sequence spans 138 residues: Small ribosomal subunit protein uS11c (138 aa).

Positions 1–21 (MTKAIQKIGSRRNGRIASRKN) are disordered. Residues 9–21 (GSRRNGRIASRKN) show a composition bias toward basic residues.

It belongs to the universal ribosomal protein uS11 family. As to quaternary structure, part of the 30S ribosomal subunit.

The protein resides in the plastid. It localises to the chloroplast. The polypeptide is Small ribosomal subunit protein uS11c (Ceratophyllum demersum (Rigid hornwort)).